The chain runs to 404 residues: Cysteine desulfurase IscS (404 aa).

Pyridoxal 5'-phosphate-binding positions include 75 to 76 (AT), Asn155, Gln183, and 203 to 205 (SGH). Lys206 carries the post-translational modification N6-(pyridoxal phosphate)lysine. Thr243 is a pyridoxal 5'-phosphate binding site. Residue Cys328 is the Cysteine persulfide intermediate of the active site. Cys328 contributes to the [2Fe-2S] cluster binding site.

This sequence belongs to the class-V pyridoxal-phosphate-dependent aminotransferase family. NifS/IscS subfamily. In terms of assembly, homodimer. Forms a heterotetramer with IscU, interacts with other sulfur acceptors. Requires pyridoxal 5'-phosphate as cofactor.

The protein localises to the cytoplasm. It carries out the reaction (sulfur carrier)-H + L-cysteine = (sulfur carrier)-SH + L-alanine. Its pathway is cofactor biosynthesis; iron-sulfur cluster biosynthesis. Functionally, master enzyme that delivers sulfur to a number of partners involved in Fe-S cluster assembly, tRNA modification or cofactor biosynthesis. Catalyzes the removal of elemental sulfur and selenium atoms from cysteine and selenocysteine to produce alanine. Functions as a sulfur delivery protein for Fe-S cluster synthesis onto IscU, an Fe-S scaffold assembly protein, as well as other S acceptor proteins. Also functions as a selenium delivery protein in the pathway for the biosynthesis of selenophosphate. The chain is Cysteine desulfurase IscS from Salmonella gallinarum (strain 287/91 / NCTC 13346).